A 437-amino-acid polypeptide reads, in one-letter code: Chromosomal replication initiator protein DnaA (437 aa).

Positions 1–69 are domain I, interacts with DnaA modulators; sequence MLGDTTLKQL…AHLFELSTGI (69 aa). The segment at 69-100 is domain II; it reads IRPKIEIRLGSLKKDVKSSSPKAGVSKGQKST. The domain III, AAA+ region stretch occupies residues 101 to 315; sequence ILNPSFTFDS…GIIIKLNAYA (215 aa). ATP contacts are provided by G145, G147, K148, and T149. The segment at 316-437 is domain IV, binds dsDNA; the sequence is NLMNQEITLQ…ELKNKIKSRN (122 aa).

It belongs to the DnaA family. Oligomerizes as a right-handed, spiral filament on DNA at oriC.

Its subcellular location is the cytoplasm. In terms of biological role, plays an essential role in the initiation and regulation of chromosomal replication. ATP-DnaA binds to the origin of replication (oriC) to initiate formation of the DNA replication initiation complex once per cell cycle. Binds the DnaA box (a 9 base pair repeat at the origin) and separates the double-stranded (ds)DNA. Forms a right-handed helical filament on oriC DNA; dsDNA binds to the exterior of the filament while single-stranded (ss)DNA is stabiized in the filament's interior. The ATP-DnaA-oriC complex binds and stabilizes one strand of the AT-rich DNA unwinding element (DUE), permitting loading of DNA polymerase. After initiation quickly degrades to an ADP-DnaA complex that is not apt for DNA replication. Binds acidic phospholipids. The chain is Chromosomal replication initiator protein DnaA from Wolinella succinogenes (strain ATCC 29543 / DSM 1740 / CCUG 13145 / JCM 31913 / LMG 7466 / NCTC 11488 / FDC 602W) (Vibrio succinogenes).